Reading from the N-terminus, the 355-residue chain is Histidinol-phosphate aminotransferase 2 (355 aa).

K210 is subject to N6-(pyridoxal phosphate)lysine.

The protein belongs to the class-II pyridoxal-phosphate-dependent aminotransferase family. Histidinol-phosphate aminotransferase subfamily. Homodimer. Requires pyridoxal 5'-phosphate as cofactor.

The enzyme catalyses L-histidinol phosphate + 2-oxoglutarate = 3-(imidazol-4-yl)-2-oxopropyl phosphate + L-glutamate. The protein operates within amino-acid biosynthesis; L-histidine biosynthesis; L-histidine from 5-phospho-alpha-D-ribose 1-diphosphate: step 7/9. This Gluconobacter oxydans (strain 621H) (Gluconobacter suboxydans) protein is Histidinol-phosphate aminotransferase 2.